Reading from the N-terminus, the 1188-residue chain is Zinc finger SWIM domain-containing protein 5 (1188 aa).

Positions 1-10 (MAEGGEREEL) are enriched in basic and acidic residues. Disordered stretches follow at residues 1–46 (MAEG…GAGG) and 123–171 (AGAA…TGTA). 2 stretches are compositionally biased toward low complexity: residues 126-136 (AAGAAGASPVE) and 146-155 (AAPAGSAPGA). Over residues 156–171 (AGAGSSPGLGAGTGTA) the composition is skewed to gly residues. The segment at 222 to 259 (YKVAISFDRCKITSVSCGCGNKDIFYCAHVVALSLYRI) adopts an SWIM-type zinc-finger fold.

The chain is Zinc finger SWIM domain-containing protein 5 (Zswim5) from Mus musculus (Mouse).